Consider the following 417-residue polypeptide: MSSAFDFEPQPRRASVAVDVGGVIVGGGAPVVVQSMTNTDTADIDATVAQVAALHKAGSELVRITVDRDESAAAVPKIRERLLRLGIDVPLVGDFHYIGHKLLADHPACAEALAKYRINPGNVGFKDKKDKQFAEIIEMAIRYDKPVRIGVNWGSLDQELLTRLMDANQANGSPLTAQQVMRETIVQSALLSAELAEELGLPRSRIILSAKVSGVQDLIAVYAMLAARSVHALHLGLTEAGMGTKGIVASSASLGILMQQGIGDTIRISLTPEPGGDRTREVQVAQELLQVMGFRQFIPVVAACPGCGRTTSTVFQELAQKIQEDIRASMPVWREKYPGVEALKVAVMGCIVNGPGESKHADIGISLPGTGEMPAAPVFIDGQKALTLRGPKIAEDFQLLVADYIEKRFGHGQAAAE.

[4Fe-4S] cluster contacts are provided by Cys304, Cys307, Cys350, and Glu357.

This sequence belongs to the IspG family. [4Fe-4S] cluster serves as cofactor.

It carries out the reaction (2E)-4-hydroxy-3-methylbut-2-enyl diphosphate + oxidized [flavodoxin] + H2O + 2 H(+) = 2-C-methyl-D-erythritol 2,4-cyclic diphosphate + reduced [flavodoxin]. The protein operates within isoprenoid biosynthesis; isopentenyl diphosphate biosynthesis via DXP pathway; isopentenyl diphosphate from 1-deoxy-D-xylulose 5-phosphate: step 5/6. Converts 2C-methyl-D-erythritol 2,4-cyclodiphosphate (ME-2,4cPP) into 1-hydroxy-2-methyl-2-(E)-butenyl 4-diphosphate. This Rhizobium meliloti (strain 1021) (Ensifer meliloti) protein is 4-hydroxy-3-methylbut-2-en-1-yl diphosphate synthase (flavodoxin).